Here is a 246-residue protein sequence, read N- to C-terminus: 1-(5-phosphoribosyl)-5-[(5-phosphoribosylamino)methylideneamino] imidazole-4-carboxamide isomerase (246 aa).

Residue D8 is the Proton acceptor of the active site. The Proton donor role is filled by D129.

It belongs to the HisA/HisF family.

It is found in the cytoplasm. The enzyme catalyses 1-(5-phospho-beta-D-ribosyl)-5-[(5-phospho-beta-D-ribosylamino)methylideneamino]imidazole-4-carboxamide = 5-[(5-phospho-1-deoxy-D-ribulos-1-ylimino)methylamino]-1-(5-phospho-beta-D-ribosyl)imidazole-4-carboxamide. Its pathway is amino-acid biosynthesis; L-histidine biosynthesis; L-histidine from 5-phospho-alpha-D-ribose 1-diphosphate: step 4/9. The chain is 1-(5-phosphoribosyl)-5-[(5-phosphoribosylamino)methylideneamino] imidazole-4-carboxamide isomerase from Desulforamulus reducens (strain ATCC BAA-1160 / DSM 100696 / MI-1) (Desulfotomaculum reducens).